The chain runs to 332 residues: Protein FAM131B (332 aa).

The tract at residues 1–22 is disordered; it reads MDSTSSLHGSSLHRPSTEQTRT. Serine 47 carries the post-translational modification Phosphoserine. Positions 95–114 are disordered; the sequence is PTIQPQHSHEAVRRDTDAYS. Over residues 101–111 the composition is skewed to basic and acidic residues; the sequence is HSHEAVRRDTD. A phosphoserine mark is found at serine 114 and serine 117. Residues 221–332 form a disordered region; sequence LGPAFDDSQP…FDEEEGDANN (112 aa). 2 stretches are compositionally biased toward basic and acidic residues: residues 272–281 and 288–302; these read PVEEEKRPLA and AGCRDLESLSPREDP. Phosphoserine occurs at positions 295, 297, and 313. Threonine 316 bears the Phosphothreonine mark. Phosphoserine is present on residues serine 317, serine 318, and serine 322. A compositionally biased stretch (acidic residues) spans 323–332; sequence FDEEEGDANN.

It belongs to the FAM131 family.

This chain is Protein FAM131B (Fam131b), found in Mus musculus (Mouse).